A 133-amino-acid chain; its full sequence is Protein PROTON GRADIENT REGULATION 5, chloroplastic (133 aa).

Residues 1 to 60 (MAAASISAIGCNQTLIGTSFYGGWGSSISGEDYQTMLSKTVAPPQQARVSRKAIRAVPMM) constitute a chloroplast transit peptide.

The protein belongs to the PGR5 family. Interacts with PGRL1A and PGRL1B. Post-translationally, disulfide bonds; Cys-11 and Cys-105 are probably involved in the formation of disulfide bridges with 'Cys-300' and 'Cys-303' of PGRL1A. 'Cys-272' and 'Cys-275' of PGRL1A may also be used to form the disulfide bridges, but in this case the cyclic electron flow is lost.

It localises to the plastid. The protein resides in the chloroplast thylakoid membrane. Its function is as follows. Critical for growth under fluctuating-light conditions. Involved in the regulation of the cyclic electron flow (CEF) around Photosystem I. Essential for the reduction of PGRL1A by ferredoxin and for photoprotection. Contributes to maximize photosynthesis efficiency after a long dark adaptation via the regulation of non-photochemical quenching (NPQ); acts independently from DLDG1. Promotes the induction of steady-state proton motive force (pmf) and energy-dependent quenching (qE). The polypeptide is Protein PROTON GRADIENT REGULATION 5, chloroplastic (Arabidopsis thaliana (Mouse-ear cress)).